The primary structure comprises 146 residues: MYPAHLLVLLAVCVSLLGAASVPPQPLNLVQFGYLIQCANHGSRATWHYMDYGCYCGAGGSGTPVDDLDRCCKIHDDCYGDAEKKGCSPKMLAYDYYCGENGPYCKNIKKECQRFVCACDVQAAKCFAGAPYNDANWNIDTTKHCQ.

The N-terminal stretch at 1-19 (MYPAHLLVLLAVCVSLLGA) is a signal peptide. The propeptide occupies 20-27 (ASVPPQPL). 7 disulfide bridges follow: Cys-38–Cys-98, Cys-54–Cys-145, Cys-56–Cys-72, Cys-71–Cys-126, Cys-78–Cys-119, Cys-87–Cys-112, and Cys-105–Cys-117. Residues Tyr-55, Gly-57, and Gly-59 each contribute to the Ca(2+) site. His-75 is a catalytic residue. Asp-76 is a Ca(2+) binding site. Asp-120 is a catalytic residue.

Belongs to the phospholipase A2 family. Group I subfamily. D49 sub-subfamily. Ca(2+) serves as cofactor. In terms of tissue distribution, expressed by the venom gland.

Its subcellular location is the secreted. The catalysed reaction is a 1,2-diacyl-sn-glycero-3-phosphocholine + H2O = a 1-acyl-sn-glycero-3-phosphocholine + a fatty acid + H(+). In terms of biological role, snake venom phospholipase A2 (PLA2) that inhibits collagen-induced platelet aggregation. PLA2 catalyzes the calcium-dependent hydrolysis of the 2-acyl groups in 3-sn-phosphoglycerides. The protein is Phospholipase A2 PS22 of Drysdalia coronoides (White-lipped snake).